The following is a 247-amino-acid chain: LHFPL tetraspan subfamily member 4 protein (247 aa).

Transmembrane regions (helical) follow at residues 22 to 42 (IGVL…VVFI), 97 to 117 (FFVL…ALFF), 127 to 147 (ICAW…MIFP), and 178 to 198 (ILAI…FVLG).

Belongs to the LHFP family. As to quaternary structure, interacts with GABA(A) receptor subunits. Interacts with GABRB3. Interacts with GABRA2. Interacts with GABRG2. Interacts with GABRA1. Identified in a complex of 720 kDa composed of LHFPL4, NLGN2, GABRA1, GABRB2, GABRG2 and GABRB3. Interacts with NLGN2; leading to mutual regulation of protein level and synaptic clustering. As to expression, highly expressed in the brain, including the cortex, hippocampus, midbrain, olfactory bulb pona plus medulla (at protein level). Expressed in the in the cerebellar granular layer and in granular layer. Colocalized with GPHN at inhibitory synapses. Weakly expressed in heart, testis, lung, intestine, vagina, ovary and uterus.

It is found in the cell projection. It localises to the dendrite. The protein resides in the postsynaptic cell membrane. Its function is as follows. Plays a role in the regulation of inhibitory synapse formation and function by being involved in maintening gamma-aminobutyric acid receptors (GABAARs) clustering and their associated scaffold proteins at inhibitory synaptic sites. Acts in concert with NLGN2 to recruit or stabilize GABAARs. The protein is LHFPL tetraspan subfamily member 4 protein of Mus musculus (Mouse).